Here is a 198-residue protein sequence, read N- to C-terminus: (S)-2-hydroxypropylphosphonic acid epoxidase (198 aa).

Positions 15-70 (LKDRREQVKMDHAALASLLGETPETVAAWENGEGGELTLTQLGRIAHVLGTSIGAL) constitute an HTH cro/C1-type domain. Lys-23 is a binding site for substrate. The segment at residues 26–45 (HAALASLLGETPETVAAWEN) is a DNA-binding region (H-T-H motif). Residues Arg-97, Tyr-105, 135 to 138 (NSGH), and Glu-142 each bind substrate. Positions 136-196 (SGHAGNEFLF…GTGSAKLIAV (61 aa)) constitute a Cupin type-2 domain. Fe cation is bound by residues His-138, Glu-142, and His-180.

This sequence belongs to the non-heme iron-dependent dioxygenase family. Homotetramer. Fe(2+) serves as cofactor.

It carries out the reaction (S)-2-hydroxypropylphosphonate + H2O2 = (1R,2S)-epoxypropylphosphonate + 2 H2O. The protein operates within antibiotic biosynthesis; fosfomycin biosynthesis. Functionally, non-heme-dependent dioxygenase that catalyzes the oxidative epoxidation of (S)-2-hydroxypropylphosphonate into (1R,2S)-epoxypropylphosphonate, the final step in the biosynthesis of fosfomycin antibiotic. The sequence is that of (S)-2-hydroxypropylphosphonic acid epoxidase (hppE) from Streptomyces wedmorensis.